We begin with the raw amino-acid sequence, 1292 residues long: Myosin-1 (1292 aa).

The Myosin motor domain maps to 35-714 (VGVSDLTLLS…TLFALENMRD (680 aa)). An ATP-binding site is contributed by 128–135 (GESGAGKT). Ser-356 is modified (phosphoserine). An actin-binding region spans residues 403–485 (SIGILDIYGF…PGIFAALNDS (83 aa)). IQ domains lie at 718–738 (HNMA…RIDS) and 739–764 (AIRI…YGNK). The TH1 domain maps to 770 to 960 (KERRAMSLLG…TIMVRRGRPG (191 aa)). Disordered stretches follow at residues 956–991 (RGRP…GHPT), 1017–1180 (YSLN…FPLK), and 1227–1258 (PVAS…SAAT). The segment covering 1062 to 1081 (MDNSSAAYGNASALPNSAPS) has biased composition (polar residues). Composition is skewed to pro residues over residues 1087 to 1121 (ASRP…PMPR) and 1142 to 1155 (APPP…PPAA). One can recognise an SH3 domain in the interval 1157–1219 (PSEPVYEAAF…PTAYIVESKA (63 aa)). Residues 1240-1258 (ATREAGTTSAATAAASAAT) are compositionally biased toward low complexity.

The protein belongs to the TRAFAC class myosin-kinesin ATPase superfamily. Myosin family. Phosphorylation of the TEDS site (Ser-356) is required for the polarization of the actin cytoskeleton. Phosphorylation probably activates the myosin-I ATPase activity.

Its subcellular location is the cytoplasm. The protein localises to the cytoskeleton. It localises to the actin patch. Its function is as follows. Type-I myosin implicated in the organization of the actin cytoskeleton. Required for proper actin cytoskeleton polarization. At the cell cortex, assembles in patch-like structures together with proteins from the actin-polymerizing machinery and promotes actin assembly. Functions as actin nucleation-promoting factor (NPF) for the Arp2/3 complex. This chain is Myosin-1 (MYO1), found in Eremothecium gossypii (strain ATCC 10895 / CBS 109.51 / FGSC 9923 / NRRL Y-1056) (Yeast).